A 312-amino-acid polypeptide reads, in one-letter code: DNA-directed RNA polymerase subunit alpha (312 aa).

An alpha N-terminal domain (alpha-NTD) region spans residues 1–229; it reads MLQYQIDRIE…ELFQPLATVT (229 aa). Residues 246 to 312 form an alpha C-terminal domain (alpha-CTD) region; the sequence is IPLEELNLSV…ISIPQSRTSA (67 aa).

It belongs to the RNA polymerase alpha chain family. As to quaternary structure, in cyanobacteria the RNAP catalytic core is composed of 2 alpha, 1 beta, 1 beta', 1 gamma and 1 omega subunit. When a sigma factor is associated with the core the holoenzyme is formed, which can initiate transcription.

It catalyses the reaction RNA(n) + a ribonucleoside 5'-triphosphate = RNA(n+1) + diphosphate. Functionally, DNA-dependent RNA polymerase catalyzes the transcription of DNA into RNA using the four ribonucleoside triphosphates as substrates. This Parasynechococcus marenigrum (strain WH8102) protein is DNA-directed RNA polymerase subunit alpha.